The primary structure comprises 289 residues: Ribosomal protein L11 methyltransferase (289 aa).

The S-adenosyl-L-methionine site is built by threonine 134, glycine 155, aspartate 177, and asparagine 225.

Belongs to the methyltransferase superfamily. PrmA family.

The protein localises to the cytoplasm. The enzyme catalyses L-lysyl-[protein] + 3 S-adenosyl-L-methionine = N(6),N(6),N(6)-trimethyl-L-lysyl-[protein] + 3 S-adenosyl-L-homocysteine + 3 H(+). Its function is as follows. Methylates ribosomal protein L11. This is Ribosomal protein L11 methyltransferase from Parasynechococcus marenigrum (strain WH8102).